A 255-amino-acid polypeptide reads, in one-letter code: Ribosomal RNA small subunit methyltransferase J (255 aa).

S-adenosyl-L-methionine is bound by residues 107 to 108 (RD), 123 to 124 (ER), and aspartate 178. The interval 228–247 (ARAEPLSGRKPSHQIPGKTT) is disordered.

The protein belongs to the methyltransferase superfamily. RsmJ family.

The protein resides in the cytoplasm. It carries out the reaction guanosine(1516) in 16S rRNA + S-adenosyl-L-methionine = N(2)-methylguanosine(1516) in 16S rRNA + S-adenosyl-L-homocysteine + H(+). Its function is as follows. Specifically methylates the guanosine in position 1516 of 16S rRNA. This Thioalkalivibrio sulfidiphilus (strain HL-EbGR7) protein is Ribosomal RNA small subunit methyltransferase J.